We begin with the raw amino-acid sequence, 146 residues long: Benzoylsuccinyl-CoA thiolase subunit BbsA (146 aa).

Residues cysteine 42, cysteine 45, cysteine 55, and cysteine 58 each contribute to the Zn(2+) site.

It belongs to the BbsA family. Heterotetramer composed of two BbsA subunits and two BbsB subunits. Both BbsA and BbsB are essential for enzymatic activity.

The catalysed reaction is (S)-2-benzoylsuccinyl-CoA + CoA = benzoyl-CoA + succinyl-CoA. Its pathway is xenobiotic degradation; toluene degradation. Functionally, component of the BbsAB thiolase complex, which catalyzes the thiolytic cleavage of (S)-2-benzoylsuccinyl-CoA to succinyl-CoA and benzoyl-CoA, the final step of anaerobic toluene metabolism. The BbsA subunit critically contributes to an induced-fit process for productive binding of a CoA substrate into the active site of BbsB. This Geobacter metallireducens (strain ATCC 53774 / DSM 7210 / GS-15) protein is Benzoylsuccinyl-CoA thiolase subunit BbsA.